The following is a 114-amino-acid chain: Large ribosomal subunit protein uL22 (114 aa).

Belongs to the universal ribosomal protein uL22 family. Part of the 50S ribosomal subunit.

This protein binds specifically to 23S rRNA; its binding is stimulated by other ribosomal proteins, e.g. L4, L17, and L20. It is important during the early stages of 50S assembly. It makes multiple contacts with different domains of the 23S rRNA in the assembled 50S subunit and ribosome. In terms of biological role, the globular domain of the protein is located near the polypeptide exit tunnel on the outside of the subunit, while an extended beta-hairpin is found that lines the wall of the exit tunnel in the center of the 70S ribosome. The protein is Large ribosomal subunit protein uL22 of Methylacidiphilum infernorum (isolate V4) (Methylokorus infernorum (strain V4)).